The primary structure comprises 256 residues: Acetoacetate decarboxylase 3 (256 aa).

Lys110 acts as the Schiff-base intermediate with acetoacetate in catalysis.

It belongs to the ADC family.

It catalyses the reaction acetoacetate + H(+) = acetone + CO2. Its function is as follows. Catalyzes the conversion of acetoacetate to acetone and carbon dioxide. The protein is Acetoacetate decarboxylase 3 of Mesorhizobium japonicum (strain LMG 29417 / CECT 9101 / MAFF 303099) (Mesorhizobium loti (strain MAFF 303099)).